We begin with the raw amino-acid sequence, 871 residues long: DNA mismatch repair protein MutS 1 (871 aa).

614–621 (GPNMSGKS) contributes to the ATP binding site.

The protein belongs to the DNA mismatch repair MutS family.

This protein is involved in the repair of mismatches in DNA. It is possible that it carries out the mismatch recognition step. This protein has a weak ATPase activity. The polypeptide is DNA mismatch repair protein MutS 1 (Halobacterium salinarum (strain ATCC 29341 / DSM 671 / R1)).